We begin with the raw amino-acid sequence, 443 residues long: Palmitoyltransferase pfa5 (443 aa).

2 consecutive transmembrane segments (helical) span residues 17-37 (IIPPILIGVFGYASYAITKPL) and 57-77 (AGAAILAIYYVLLIPVLATYL). The tract at residues 96–137 (CTQNQTGSDGSKHRHRRHRRRKSGHHLSKTTEKTDRSDGGDV) is disordered. Over residues 107 to 123 (KHRHRRHRRRKSGHHLS) the composition is skewed to basic residues. Positions 124–137 (KTTEKTDRSDGGDV) are enriched in basic and acidic residues. A DHHC domain is found at 175–225 (VYCSTCCQFKTDRAHHCREVDRCVRKMDHFCPWVGGVVSETSFKFFIQFIV). 2 consecutive transmembrane segments (helical) span residues 220 to 240 (FIQFIVYTMIYCIFVLIVFAI) and 256 to 276 (WIVCLALSSLFGFFTFGVAIS). The segment at 410 to 443 (AGLEVSTESESADPVGAAETPQHEQRRGKHRRRN) is disordered.

This sequence belongs to the DHHC palmitoyltransferase family. PFA5 subfamily. Autopalmitoylated.

It localises to the membrane. The enzyme catalyses L-cysteinyl-[protein] + hexadecanoyl-CoA = S-hexadecanoyl-L-cysteinyl-[protein] + CoA. This chain is Palmitoyltransferase pfa5 (pfa5), found in Aspergillus fumigatus (strain ATCC MYA-4609 / CBS 101355 / FGSC A1100 / Af293) (Neosartorya fumigata).